Reading from the N-terminus, the 344-residue chain is Phosphoribosylformylglycinamidine cyclo-ligase (344 aa).

It belongs to the AIR synthase family.

The protein resides in the cytoplasm. The enzyme catalyses 2-formamido-N(1)-(5-O-phospho-beta-D-ribosyl)acetamidine + ATP = 5-amino-1-(5-phospho-beta-D-ribosyl)imidazole + ADP + phosphate + H(+). It participates in purine metabolism; IMP biosynthesis via de novo pathway; 5-amino-1-(5-phospho-D-ribosyl)imidazole from N(2)-formyl-N(1)-(5-phospho-D-ribosyl)glycinamide: step 2/2. The polypeptide is Phosphoribosylformylglycinamidine cyclo-ligase (Neisseria gonorrhoeae (strain ATCC 700825 / FA 1090)).